We begin with the raw amino-acid sequence, 504 residues long: D-alanine--D-alanyl carrier protein ligase (504 aa).

Residue 152 to 153 (TS) coordinates ATP. Asp197 contacts D-alanine. 292–297 (NTYGPT) is an ATP binding site. Position 301 (Val301) interacts with D-alanine. Residues Asp383, 394–397 (YNGR), and Lys492 contribute to the ATP site. Lys492 is a D-alanine binding site.

This sequence belongs to the ATP-dependent AMP-binding enzyme family. DltA subfamily.

It localises to the cytoplasm. It catalyses the reaction holo-[D-alanyl-carrier protein] + D-alanine + ATP = D-alanyl-[D-alanyl-carrier protein] + AMP + diphosphate. Its pathway is cell wall biogenesis; lipoteichoic acid biosynthesis. In terms of biological role, catalyzes the first step in the D-alanylation of lipoteichoic acid (LTA), the activation of D-alanine and its transfer onto the D-alanyl carrier protein (Dcp) DltC. In an ATP-dependent two-step reaction, forms a high energy D-alanyl-AMP intermediate, followed by transfer of the D-alanyl residue as a thiol ester to the phosphopantheinyl prosthetic group of the Dcp. D-alanylation of LTA plays an important role in modulating the properties of the cell wall in Gram-positive bacteria, influencing the net charge of the cell wall. The sequence is that of D-alanine--D-alanyl carrier protein ligase from Bacillus cereus (strain Q1).